The following is a 1407-amino-acid chain: DNA-directed RNA polymerase subunit beta' (1407 aa).

Residues C70, C72, C85, and C88 each contribute to the Zn(2+) site. Mg(2+) contacts are provided by D460, D462, and D464. An N6-acetyllysine modification is found at K972.

This sequence belongs to the RNA polymerase beta' chain family. As to quaternary structure, the RNAP catalytic core consists of 2 alpha, 1 beta, 1 beta' and 1 omega subunit. When a sigma factor is associated with the core the holoenzyme is formed, which can initiate transcription. The cofactor is Mg(2+). Requires Zn(2+) as cofactor.

It catalyses the reaction RNA(n) + a ribonucleoside 5'-triphosphate = RNA(n+1) + diphosphate. Functionally, DNA-dependent RNA polymerase catalyzes the transcription of DNA into RNA using the four ribonucleoside triphosphates as substrates. This Escherichia coli O6:K15:H31 (strain 536 / UPEC) protein is DNA-directed RNA polymerase subunit beta'.